The primary structure comprises 274 residues: Orotidine 5'-phosphate decarboxylase (274 aa).

Catalysis depends on Lys-95, which acts as the Proton donor.

The protein belongs to the OMP decarboxylase family. Type 2 subfamily.

The enzyme catalyses orotidine 5'-phosphate + H(+) = UMP + CO2. It participates in pyrimidine metabolism; UMP biosynthesis via de novo pathway; UMP from orotate: step 2/2. In Verminephrobacter eiseniae (strain EF01-2), this protein is Orotidine 5'-phosphate decarboxylase.